The sequence spans 434 residues: Indole diterpene prenyltransferase nodD2 (434 aa).

Residues 85 to 86 and glutamate 94 contribute to the L-tryptophan site; that span reads LI. The substrate site is built by arginine 107, lysine 194, arginine 268, lysine 270, tyrosine 272, glutamine 351, tyrosine 353, tyrosine 418, and tyrosine 422.

Belongs to the tryptophan dimethylallyltransferase family.

Its pathway is secondary metabolite biosynthesis. In terms of biological role, indole diterpene prenyltransferase; part of the gene cluster that mediates the biosynthesis of the indole diterpenes nodulisporic acids (NA). Nodulisporic acid A (NAA) and its chemically modified derivatives are of particular significance because of their highly potent insecticidal activity against blood-feeding arthropods and lack of observable adverse effects on mammals, in particular the tremogenicity associated with the paspaline-derived IDTs is not observed. The geranylgeranyl diphosphate (GGPP) synthase ggs1, localized outside of the cluster, is proposed to catalyze the first step in nodulisporic acid biosynthesis via conversion of farnesyl pyrophosphate and isopentyl pyrophosphate into geranylgeranyl pyrophosphate (GGPP). Condensation of indole-3-glycerol phosphate with GGPP by the prenyl transferase nodC then forms 3-geranylgeranylindole (3-GGI). Epoxidation by the FAD-dependent monooxygenase nodM leads to a single-epoxidized-GGI that is substrate of the terpene cyclase nodB for cyclization to yield emindole SB. The terminal methyl carbon, C28, of emindole SB is then oxidized by the cytochrome P450 monooxygenase nodW to produce nodulisporic acid F (NAF), the pentacyclic core of NAA. NAF is converted to nodulisporic acid E (NAE) via prenylation. This step is probably performed by one of the indole diterpene prenyltransferases nodD1 or nodD2. Several oxidation steps performed by the FAD-linked oxidoreductase nodO and one of the cytochrome P450 monooxygenase nodR, nodX or nodZ further convert NAE to nodulisporic acid D (NAD). NAD is substrate of cytochrome P450 monooxygenase nodJ to produce the precursor of nodulisporic acid C (NAC), converted to NAC by one of the indole diterpene prenyltransferases nodD1 or nodD2. The FAD-dependent monooxygenase nodY2 then oxidizes NAC to nodulisporic acid B (NAB). Finally NAB is converted to NAA by one of the cytochrome P450 monooxygenases nodR, nodX or nodZ. This Hypoxylon pulicicidum protein is Indole diterpene prenyltransferase nodD2.